We begin with the raw amino-acid sequence, 301 residues long: Thioredoxin-related transmembrane protein 2-A (301 aa).

A signal peptide spans methionine 1–lysine 19. The Extracellular portion of the chain corresponds to tryptophan 20 to arginine 111. A helical membrane pass occupies residues phenylalanine 112–tyrosine 132. The region spanning valine 122–lysine 269 is the Thioredoxin domain. The Cytoplasmic segment spans residues methionine 133–lysine 301. Residues serine 268–lysine 301 are disordered. Over residues leucine 280 to serine 295 the composition is skewed to acidic residues. Residues lysine 298–lysine 301 carry the Di-lysine motif motif.

Monomer. Homodimer; disulfide-linked. Occurs in both reduced and oxidized monomeric form. Oxidative conditions increase homodimerization.

Its subcellular location is the endoplasmic reticulum membrane. The protein localises to the mitochondrion membrane. In terms of biological role, endoplasmic reticulum and mitochondria-associated protein that probably functions as a regulator of cellular redox state and thereby regulates protein post-translational modification, protein folding and mitochondrial activity. This Danio rerio (Zebrafish) protein is Thioredoxin-related transmembrane protein 2-A.